Consider the following 641-residue polypeptide: DEAD-box ATP-dependent RNA helicase 50 (641 aa).

Disordered regions lie at residues 86-115 (SMPSPAVLSTTTRVPDRPKENGRSTSIGNF), 129-189 (RSAH…LNSV), and 197-216 (DDLDFPGSEATSGSKRWGNI). A compositionally biased stretch (acidic residues) spans 150 to 159 (PSDESDEDGT). A Q motif motif is present at residues 240–268 (RSFKEIGCSDEILGALRSFGFPRPSHIQA). Positions 271 to 452 (YRPVLEGKSC…VETFPDCELI (182 aa)) constitute a Helicase ATP-binding domain. 284–291 (DQSGSGKT) contacts ATP. The DEAD box signature appears at 399-402 (DEVD). The Helicase C-terminal domain occupies 487 to 641 (NKKSALVKII…GHPLHDVPCV (155 aa)).

This sequence belongs to the DEAD box helicase family.

It catalyses the reaction ATP + H2O = ADP + phosphate + H(+). Functionally, probably involved in resistance to biotic and abiotic stresses. Confers tolerance to oxidative stress and mediates pathogenesis-related (PR) genes expression. Exhibits RNA-dependent ATPase and ATP-dependent RNA helicase activities in vitro. This is DEAD-box ATP-dependent RNA helicase 50 from Oryza sativa subsp. japonica (Rice).